The primary structure comprises 259 residues: MISPDAARNVVGIIGNVISFGLFLAPVPTFWRICKRKDVEEFKADPYLATLLNCMLWVFYGIPVVHPNSILVVTINGIGLLVEGTYLLIFFLYSPNKKRLRMCAVLGVELVFMLAVILGVLLGAHTHEKRSMIVGILCVFFGSIMYFSPLTIMGKVIKTKSVEYMPFFLSLVCFLNGVCWTAYALIRFDIYVTIPNGLGALFGAIQLILYACYYRTTPKKTKAAKDVEMPSVVVSGTGAAAAAGGGNTGGGSISVTVER.

Over 1-9 (MISPDAARN) the chain is Extracellular. The helical transmembrane segment at 10–30 (VVGIIGNVISFGLFLAPVPTF) threads the bilayer. Residues 10-98 (VVGIIGNVIS…IFFLYSPNKK (89 aa)) enclose the MtN3/slv 1 domain. The Cytoplasmic portion of the chain corresponds to 31-45 (WRICKRKDVEEFKAD). The chain crosses the membrane as a helical span at residues 46–66 (PYLATLLNCMLWVFYGIPVVH). The Extracellular segment spans residues 67–69 (PNS). The helical transmembrane segment at 70–90 (ILVVTINGIGLLVEGTYLLIF) threads the bilayer. Over 91 to 103 (FLYSPNKKRLRMC) the chain is Cytoplasmic. Residues 104 to 124 (AVLGVELVFMLAVILGVLLGA) traverse the membrane as a helical segment. Topologically, residues 125–131 (HTHEKRS) are extracellular. The chain crosses the membrane as a helical span at residues 132 to 152 (MIVGILCVFFGSIMYFSPLTI). A MtN3/slv 2 domain is found at 133-216 (IVGILCVFFG…LILYACYYRT (84 aa)). Residues 153-165 (MGKVIKTKSVEYM) are Cytoplasmic-facing. A helical membrane pass occupies residues 166-186 (PFFLSLVCFLNGVCWTAYALI). Residues 187–189 (RFD) are Extracellular-facing. The helical transmembrane segment at 190-210 (IYVTIPNGLGALFGAIQLILY) threads the bilayer. Over 211–259 (ACYYRTTPKKTKAAKDVEMPSVVVSGTGAAAAAGGGNTGGGSISVTVER) the chain is Cytoplasmic.

The protein belongs to the SWEET sugar transporter family. In terms of assembly, forms homooligomers and/or heterooligomers.

It is found in the cell membrane. In terms of biological role, mediates both low-affinity uptake and efflux of sugar across the plasma membrane. The protein is Bidirectional sugar transporter SWEET6a (SWEET6A) of Oryza sativa subsp. indica (Rice).